We begin with the raw amino-acid sequence, 336 residues long: C4-dicarboxylate-binding periplasmic protein DctP (336 aa).

The first 31 residues, 1–31 (MTRLNTCTFIKQIVKMTSIAALLGASLNSWA), serve as a signal peptide directing secretion. 6 residues coordinate (S)-malate: K48, K101, R176, N216, N220, and Y243. Succinate-binding residues include K48, K101, R176, N216, N220, and Y243.

Belongs to the bacterial solute-binding protein 7 family. In terms of assembly, the complex comprises the extracytoplasmic solute receptor protein DctP, and the two transmembrane proteins DctQ and DctM.

Its subcellular location is the periplasm. In terms of biological role, part of the tripartite ATP-independent periplasmic (TRAP) transport system DctPQM involved in C4-dicarboxylates uptake. Required for the utilization of succinate, fumarate, L-malate and alpha-ketoglutarate. Binds succinate and malate. This chain is C4-dicarboxylate-binding periplasmic protein DctP, found in Shewanella loihica (strain ATCC BAA-1088 / PV-4).